We begin with the raw amino-acid sequence, 88 residues long: Small ribosomal subunit protein bS20 (88 aa).

This sequence belongs to the bacterial ribosomal protein bS20 family.

Binds directly to 16S ribosomal RNA. In Methylorubrum extorquens (strain CM4 / NCIMB 13688) (Methylobacterium extorquens), this protein is Small ribosomal subunit protein bS20.